A 355-amino-acid polypeptide reads, in one-letter code: Phenylalanine--tRNA ligase alpha subunit (355 aa).

Glu273 provides a ligand contact to Mg(2+).

This sequence belongs to the class-II aminoacyl-tRNA synthetase family. Phe-tRNA synthetase alpha subunit type 1 subfamily. In terms of assembly, tetramer of two alpha and two beta subunits. The cofactor is Mg(2+).

The protein localises to the cytoplasm. The catalysed reaction is tRNA(Phe) + L-phenylalanine + ATP = L-phenylalanyl-tRNA(Phe) + AMP + diphosphate + H(+). The chain is Phenylalanine--tRNA ligase alpha subunit from Bifidobacterium longum (strain NCC 2705).